Here is a 290-residue protein sequence, read N- to C-terminus: 33 kDa chaperonin (290 aa).

2 disulfides stabilise this stretch: Cys-235–Cys-237 and Cys-268–Cys-271.

This sequence belongs to the HSP33 family. Post-translationally, under oxidizing conditions two disulfide bonds are formed involving the reactive cysteines. Under reducing conditions zinc is bound to the reactive cysteines and the protein is inactive.

The protein localises to the cytoplasm. In terms of biological role, redox regulated molecular chaperone. Protects both thermally unfolding and oxidatively damaged proteins from irreversible aggregation. Plays an important role in the bacterial defense system toward oxidative stress. In Streptococcus equi subsp. zooepidemicus (strain MGCS10565), this protein is 33 kDa chaperonin.